The sequence spans 83 residues: Lipolysis-activating peptide 1-alpha chain (83 aa).

The signal sequence occupies residues 1-21; sequence MNIILFYFMPILISLPGLLAS. The 62-residue stretch at 22–83 folds into the LCN-type CS-alpha/beta domain; sequence GTYPNDVYGL…LFWDVYKEHC (62 aa). 3 disulfides stabilise this stretch: cysteine 35/cysteine 58, cysteine 44/cysteine 63, and cysteine 48/cysteine 65.

The protein belongs to the long (3 C-C) scorpion toxin superfamily. In terms of assembly, monomer (edited version) and heterodimer (non-edited version) of this alpha chain and a beta chain (AC P0CI43). Expressed by the venom gland.

It localises to the secreted. In terms of biological role, the heterodimer non-edited LVP1 induces lipolysis in rat adipocytes. Induction of lipolysis by LVP1 appears to be mediated through the beta-2 adrenergic receptor pathway (ADRB2). Its function is as follows. The edited BmKBTx-like, similar to beta-toxins, may modulate voltage-gated sodium channels (Nav) and may block voltage-gated potassium channels (Kv). The polypeptide is Lipolysis-activating peptide 1-alpha chain (Lychas mucronatus (Chinese swimming scorpion)).